We begin with the raw amino-acid sequence, 287 residues long: Phosphoribosylaminoimidazole-succinocarboxamide synthase (287 aa).

This sequence belongs to the SAICAR synthetase family.

The enzyme catalyses 5-amino-1-(5-phospho-D-ribosyl)imidazole-4-carboxylate + L-aspartate + ATP = (2S)-2-[5-amino-1-(5-phospho-beta-D-ribosyl)imidazole-4-carboxamido]succinate + ADP + phosphate + 2 H(+). Its pathway is purine metabolism; IMP biosynthesis via de novo pathway; 5-amino-1-(5-phospho-D-ribosyl)imidazole-4-carboxamide from 5-amino-1-(5-phospho-D-ribosyl)imidazole-4-carboxylate: step 1/2. The polypeptide is Phosphoribosylaminoimidazole-succinocarboxamide synthase (Neisseria meningitidis serogroup C (strain 053442)).